Reading from the N-terminus, the 292-residue chain is tRNA-cytidine(32) 2-sulfurtransferase (292 aa).

The PP-loop motif signature appears at 62–67 (SGGKDS). The [4Fe-4S] cluster site is built by Cys-137, Cys-140, and Cys-228.

Belongs to the TtcA family. As to quaternary structure, homodimer. Requires Mg(2+) as cofactor. It depends on [4Fe-4S] cluster as a cofactor.

The protein localises to the cytoplasm. The enzyme catalyses cytidine(32) in tRNA + S-sulfanyl-L-cysteinyl-[cysteine desulfurase] + AH2 + ATP = 2-thiocytidine(32) in tRNA + L-cysteinyl-[cysteine desulfurase] + A + AMP + diphosphate + H(+). It participates in tRNA modification. Its function is as follows. Catalyzes the ATP-dependent 2-thiolation of cytidine in position 32 of tRNA, to form 2-thiocytidine (s(2)C32). The sulfur atoms are provided by the cysteine/cysteine desulfurase (IscS) system. The polypeptide is tRNA-cytidine(32) 2-sulfurtransferase (Brucella anthropi (strain ATCC 49188 / DSM 6882 / CCUG 24695 / JCM 21032 / LMG 3331 / NBRC 15819 / NCTC 12168 / Alc 37) (Ochrobactrum anthropi)).